Reading from the N-terminus, the 90-residue chain is DNA-binding protein HTa (90 aa).

The protein belongs to the bacterial histone-like protein family. Homotetramer.

Histone-like DNA-binding protein which is capable of wrapping DNA to stabilize it, and thus to prevent its denaturation under extreme environmental conditions. The chain is DNA-binding protein HTa from Thermoplasma acidophilum (strain ATCC 25905 / DSM 1728 / JCM 9062 / NBRC 15155 / AMRC-C165).